The chain runs to 310 residues: Calbindin-32 (310 aa).

EF-hand domains follow at residues 35–70 (LSAN…FVSS), 84–120 (TMLE…EENF), 131–166 (ESSV…LLKE), 177–212 (KLIE…KENF), 224–259 (LTKE…LLEL), and 283–304 (TDKH…LAKI). Residues aspartate 48, aspartate 50, asparagine 52, tyrosine 54, glutamate 59, aspartate 98, asparagine 100, aspartate 102, lysine 104, glutamate 109, aspartate 144, aspartate 146, serine 148, tyrosine 150, glutamate 155, aspartate 190, asparagine 192, aspartate 194, arginine 196, glutamate 201, aspartate 237, aspartate 239, serine 241, threonine 243, and glutamate 248 each contribute to the Ca(2+) site.

This sequence belongs to the calbindin family. Expressed in a large number of neuron of the brain and the thoracic ganglion as well as in two small muscles of the thorax.

In Drosophila melanogaster (Fruit fly), this protein is Calbindin-32 (Cbp53E).